Consider the following 377-residue polypeptide: DNA-directed RNA polymerase subunit alpha (377 aa).

Positions 1-259 are alpha N-terminal domain (alpha-NTD); sequence MSDSSHNLLY…KHFSVFEKMD (259 aa). The tract at residues 279–377 is alpha C-terminal domain (alpha-CTD); it reads ILHKLVLGIN…KIRSSKNTKG (99 aa).

This sequence belongs to the RNA polymerase alpha chain family. Homodimer. The RNAP catalytic core consists of 2 alpha, 1 beta, 1 beta' and 1 omega subunit. When a sigma factor is associated with the core the holoenzyme is formed, which can initiate transcription.

The enzyme catalyses RNA(n) + a ribonucleoside 5'-triphosphate = RNA(n+1) + diphosphate. DNA-dependent RNA polymerase catalyzes the transcription of DNA into RNA using the four ribonucleoside triphosphates as substrates. In Chlamydia trachomatis serovar L2 (strain ATCC VR-902B / DSM 19102 / 434/Bu), this protein is DNA-directed RNA polymerase subunit alpha.